The sequence spans 338 residues: Glyceraldehyde-3-phosphate dehydrogenase (338 aa).

Residues 12–13 (RI), Asp-34, and Arg-79 each bind NAD(+). Residues 150–152 (SCT), Thr-181, 210–211 (TG), and Arg-233 each bind D-glyceraldehyde 3-phosphate. The active-site Nucleophile is the Cys-151. Asn-315 contacts NAD(+).

This sequence belongs to the glyceraldehyde-3-phosphate dehydrogenase family. Homotetramer.

The protein localises to the cytoplasm. The enzyme catalyses D-glyceraldehyde 3-phosphate + phosphate + NAD(+) = (2R)-3-phospho-glyceroyl phosphate + NADH + H(+). It functions in the pathway carbohydrate degradation; glycolysis; pyruvate from D-glyceraldehyde 3-phosphate: step 1/5. The chain is Glyceraldehyde-3-phosphate dehydrogenase (gpd1) from Hypocrea atroviridis (Trichoderma atroviride).